The chain runs to 238 residues: Pyridoxine 5'-phosphate synthase (238 aa).

N9 is a 3-amino-2-oxopropyl phosphate binding site. 11–12 (DH) provides a ligand contact to 1-deoxy-D-xylulose 5-phosphate. R20 is a binding site for 3-amino-2-oxopropyl phosphate. The Proton acceptor role is filled by H45. 1-deoxy-D-xylulose 5-phosphate is bound by residues R47 and H52. E72 serves as the catalytic Proton acceptor. T102 contributes to the 1-deoxy-D-xylulose 5-phosphate binding site. H189 functions as the Proton donor in the catalytic mechanism. 3-amino-2-oxopropyl phosphate contacts are provided by residues G190 and 211-212 (GH).

The protein belongs to the PNP synthase family. Homooctamer; tetramer of dimers.

The protein localises to the cytoplasm. The enzyme catalyses 3-amino-2-oxopropyl phosphate + 1-deoxy-D-xylulose 5-phosphate = pyridoxine 5'-phosphate + phosphate + 2 H2O + H(+). Its pathway is cofactor biosynthesis; pyridoxine 5'-phosphate biosynthesis; pyridoxine 5'-phosphate from D-erythrose 4-phosphate: step 5/5. Catalyzes the complicated ring closure reaction between the two acyclic compounds 1-deoxy-D-xylulose-5-phosphate (DXP) and 3-amino-2-oxopropyl phosphate (1-amino-acetone-3-phosphate or AAP) to form pyridoxine 5'-phosphate (PNP) and inorganic phosphate. In Ehrlichia ruminantium (strain Welgevonden), this protein is Pyridoxine 5'-phosphate synthase.